The primary structure comprises 3421 residues: MAQTLVPANKAGGAQADVVVIGYRNQYDSQLGEGSHVSCLRSSLSFLRLIFTHGIDFALTADSIDGVLVEGRAWTVAGSKSGEAPCMVSIVELPNKITYANSANALCCVFSRLYGDSGFYMHPGDGFQSTQIPARQFFDGVWKSRSESFALITIGAIGLAVYRHGDVAYVFDPHGHGSVTEAFVVRVLARDVYAYLTGYAATDPESDWAGALVFFVTCGPTESEPGFLISATSLLYGISETYLSDEQYVERSVATSHPGISTPPPLTDVAVGAVSEAWQYQELENGAATLDADMEGVAPAAAQVRASVIRQPTEKRVSLPKRRRPPWTPPTSSENLTTSGNTHTVAGRPSQKVRNATANVQNPTTGNGSAWAEALNDGGVDNASRPGQAVGAAGTLQNPAPGDALAMETTQASEEALRTRRVFRLSGEDEAPYDLGDAVGVLSAEINELATRAEELDVLSSTCVDSTVWVTRPHNSPDMDILEQFITMIFNRLLSFLVENGARTRTDSPSVIAGLFPGVLAAIPTQSAVVNLLQATGMALSDVASYKSILNMVSNEDSPVGELAVIKLELVASEVIKSTQKLVARVEELERDVTSGSVNPLGLYTYLTERLVAEMTKHGGDLFAREPKPGAVSLTERIGSLFRKARTREARATRTNASLARDLNAIEAAVHAAHDKFDAIEIKPADPSDTTNMDELAKSLDLSAVPTRVAKVIKKVESMVSDSIREYFLRGVQYSARAIAMDKTSGARFQVASAAVSNLERMLDSLPNFEKSLNSVVASAGIQGPPPAQISGSRKATLLGNLLRAGQNLTTDNALGAWAALLSEAHTEGHIERRELEAVIKEITSINDHAAKKASVEADMERFRVLSAAVDQATSDMYNSNPHALDTIIRGAEEMIRQAKVVEAHFDSGRISREAASRVGVRKREVETLANSARQRAAEISAARDEIYSRLQSLLLPLAGFVGLRAAPGVLEQLAKDAQRSTSEELRNLMHEAPKQVVSTVHSHLWSLFGQFREALEHPNSTTSSALAGVGPAFAIVVRSLLDPNKQRESVEFFITHADALADTVGAVEANPNSELAVAHAVNSIAAAIQTVSVGGRTITEFAFLVPMLERYQSRLTIVRETQRLATAQRAVAASVSAAAEVTTKLRAVAVPGVQEDVLKAAIAAAKHVSSEVTAAATAAERELARLDSKALSVAQVARAHQDLQKQTAVAKQRVGEIEEVLANLNKQQRELQDRAVHDRWKSDLLAALDKIETKSSFDVSELSRLRDLGAARGYDSREFAKRAEQALAANARAVIAVLDNVFKFNPYAPVNSKKETNPTISMLYNISWWDDFTLAAPILNTLFAGVDVEELMSLMRISTGMITFASTNGGRPKYNEAVNSLSSDMLKVPQLAKYVDFYGKWYTEFNAEMDVLSKLRADVLQAVGVRSGEISRALEEVTYVRNAEVAEKVLADGVKLYIPSDALIAKAVKYLEEFNQKRFAGSAFEEAIATTIRQDLSTAREAATQAEAARSEAMHRATHILREVVEAAKAADRDASANLANLKNLLRLTPPPQSVAAALDKATSSDDIVTQAALLLGTVESTPELDIKAVEWLQQARSIIDSHPLTTKIDGKGPMDPYAERIEKLHTLRGELDELRRQLTATEVSWDEAWGNFSRAVPRADVSMDGFVDAHQRARTLQASMGVISEMRADNKYGRLPPKVIGAIESKFAERHKNLETFNDTSTVLQTAITQFDSLVQQIPPEMEYDVLRSLLASFDQLAAVLPKWVGAEYAAYRSLLLMRIGLYDEYQKIAGIAAAGSRPHLEAVEYRSAVEDANLRRASRVSSLMGDKDVILSLREAKSSIDTAFPQVLLDAKGVPVEYRVCYRAVGDKLAAMLCGKLGVSMRPAMPSDPIVESSSVSGINVTHDILQLRFGLEKAYHSGFSTFARFVRHKRADWSPTEPAQAAAEIYAAVLATTLTREYGATWHRIRFMASSGLFVASPDSVCDTQGGRGKKSNNIVHLTLSDVVLSAMLRNSMHLVNFMRLDLTRQHEYMARTITPVLTKSLLSDILINTLVPTDTSTQWRSLPLAGDLEDLAQGMLFSIRMSDWKQNSFSTTSLLDVWMRSPGESGRAAAAKIASAIPGNPLATFTVLARMCIPPNALASLWEALQPEAFSQQNLSYDDVVTSRLDIASTVQTSVAVDPEMKSVDTKSRKQLYTTTGTSTTFTLAGSAPSAVKEVSALDVATCALMFGAPVVIAMETPEMFSEASGMSFCLKIFDSRPGATDHEIIQAVSSDLSSWGTSLLALDPNAIENACLTTQLEILSGLVASKLLAPAPPCLIVLDPSMRVIKVLWESESPPNDLVITLAEDEIIAELPYLNADDDLLPPMNPDDPIYTRVISGTNIPTATTEGSLFADQQLEFLRPESNPFPFASHDSSQSLDVPSSPSSGSDKYEEDPTGIVYDAPVDDMSDMAMNKAKAWQEWLEDGFAEDDYRELSNAMPAPPKTTPVVESKQKSDSVDRAPTLPPKAAPLPPSDASAIMSGKPVFKYTPGNKSAVPPSVPAPPTLPPAPPLPQSTSKAASGPPPTLPPAPPLPQSTSKAASGPPPTLPPAPPLPQSTSKAASGPPPTLPPAPPLPQSTSKAASGATQSDSGKTLTLDVPKTQSKDKVVPVPPTDKPSTTTPAALKQSDASKPPTAAIQHQQKLGTPVTPKDSGDKPTDNASAPVGVSPVTPDGTPGAKPPPKDAPPVDDTKQPVRKSLPSQVRGGRPYIRPSLGPFKFTGPPGYTIPVHGLPPSDSNVTQSTKEPPKPAVETPAAAPAKSAAAPAAAPAKSAAAPAAAPAKSAAAPAAAPAKSAAAPAAAPAKSAAAPAAAPAKDQTKSAAEVPKPAKDQAKDQAKDQAKDQAKDQAKDQAKSTTGQKLAKDPKSDGLTDDVALEIVPEKTPLPDDSPIGAVPENTPLPDDSPIGSPDLSASKNSHTTDAVSSDRFSVACKVPLPDSPEDDFYSYAVDVPLPDSPTDDPSSGRSDARAPTVGGVASIHRKSDSRNNRQSDAWRRAFADTLHGRPRNRSATKPCKSAPYKVPHAISYTKIPSVPNDQSGLAGKPCSEEPKRPTGRDTPVGSWNVSPSQAPADIPTAIPQNQNTSESPRTTSLKSPTRTVQSSMPADDIDELAEYDLQIARAVPVTKHPQPPPANQTPPPQEPPAPIDDRKNIRPPLSEEEIIAFLINMDDDDAGNASGPVDLHSVQAPKLPKQSKPTTNQFVPLDWWTETEPVVDADSLDLSPKQQRLFSWESTRDLLNINVRDRVYEEESDDEYTVSWDQHLVPAVSPTSVSSYSSDTVTDSYTDINDPRSVVCPLDGNAQNNVREFLDTHSSRVRVVPADELLSRRYFRSTSLSAMALLIAACRTIVRRLRATRRVLTDINRSLLLDLKQIRVLLG.

Positions 1–248 (MAQTLVPANK…SETYLSDEQY (248 aa)) are deubiquitination activity. Residues 19-238 (VVIGYRNQYD…ISATSLLYGI (220 aa)) form the Peptidase C76 domain. Residues Cys39, Asp172, and His174 contribute to the active site. Residues 311–351 (QPTEKRVSLPKRRRPPWTPPTSSENLTTSGNTHTVAGRPSQ) form a disordered region. Positions 332–344 (SSENLTTSGNTHT) are enriched in polar residues. Positions 482 to 508 (LEQFITMIFNRLLSFLVENGARTRTDS) are interaction with inner tegument protein. 2 disordered regions span residues 2407-2442 (ESNPFPFASHDSSQSLDVPSSPSSGSDKYEEDPTGI) and 2479-3195 (SNAM…RKNI). Positions 2415 to 2432 (SHDSSQSLDVPSSPSSGS) are enriched in low complexity. Pro residues-rich tracts occupy residues 2506-2516 (TLPPKAAPLPP), 2541-2556 (PSVPAPPTLPPAPPLP), 2565-2577 (GPPPTLPPAPPLP), 2586-2598 (GPPPTLPPAPPLP), and 2607-2619 (GPPPTLPPAPPLP). 2 stretches are compositionally biased toward polar residues: residues 2620-2637 (QSTSKAASGATQSDSGKT) and 2778-2787 (SDSNVTQSTK). Positions 2797-2857 (PAAAPAKSAA…SAAAPAAAPA (61 aa)) are enriched in low complexity. Basic and acidic residues predominate over residues 2869–2895 (KPAKDQAKDQAKDQAKDQAKDQAKDQA). Positions 2953–2969 (LSASKNSHTTDAVSSDR) are enriched in polar residues. 2 stretches are compositionally biased toward basic and acidic residues: residues 3023-3040 (RKSDSRNNRQSDAWRRAF) and 3088-3097 (CSEEPKRPTG). Residues 3120-3146 (IPQNQNTSESPRTTSLKSPTRTVQSSM) are compositionally biased toward polar residues. The segment covering 3171–3188 (PQPPPANQTPPPQEPPAP) has biased composition (pro residues).

Belongs to the herpesviridae large tegument protein family. In terms of assembly, interacts with host CUL1 and CUL4A; these interactions inhibit the E3 ligase activity of cullins. Interacts with inner tegument protein. Interacts with capsid vertex specific component CVC2. Interacts with the major capsid protein/MCP.

Its subcellular location is the virion tegument. It is found in the host cytoplasm. The protein localises to the host nucleus. It catalyses the reaction Thiol-dependent hydrolysis of ester, thioester, amide, peptide and isopeptide bonds formed by the C-terminal Gly of ubiquitin (a 76-residue protein attached to proteins as an intracellular targeting signal).. In terms of biological role, large tegument protein that plays multiple roles in the viral cycle. During viral entry, remains associated with the capsid while most of the tegument is detached and participates in the capsid transport toward the host nucleus. Plays a role in the routing of the capsid at the nuclear pore complex and subsequent uncoating. Within the host nucleus, acts as a deneddylase and promotes the degradation of nuclear CRLs (cullin-RING ubiquitin ligases) and thereby stabilizes nuclear CRL substrates, while cytoplasmic CRLs remain unaffected. These modifications prevent host cell cycle S-phase progression and create a favorable environment allowing efficient viral genome replication. Participates later in the secondary envelopment of capsids. Indeed, plays a linker role for the association of the outer viral tegument to the capsids together with the inner tegument protein. The polypeptide is Large tegument protein deneddylase (Equus caballus (Horse)).